The sequence spans 544 residues: Chaperonin GroEL 2 (544 aa).

ATP is bound by residues 29–32, Lys-50, 86–90, Gly-414, and Asp-494; these read TLGP and DGTTT.

It belongs to the chaperonin (HSP60) family. As to quaternary structure, forms a cylinder of 14 subunits composed of two heptameric rings stacked back-to-back. Interacts with the co-chaperonin GroES.

It is found in the cytoplasm. The catalysed reaction is ATP + H2O + a folded polypeptide = ADP + phosphate + an unfolded polypeptide.. Together with its co-chaperonin GroES, plays an essential role in assisting protein folding. The GroEL-GroES system forms a nano-cage that allows encapsulation of the non-native substrate proteins and provides a physical environment optimized to promote and accelerate protein folding. The protein is Chaperonin GroEL 2 of Psychromonas ingrahamii (strain DSM 17664 / CCUG 51855 / 37).